We begin with the raw amino-acid sequence, 334 residues long: 6-phosphogluconolactonase (334 aa).

It belongs to the cycloisomerase 2 family.

The catalysed reaction is 6-phospho-D-glucono-1,5-lactone + H2O = 6-phospho-D-gluconate + H(+). Its pathway is carbohydrate degradation; pentose phosphate pathway; D-ribulose 5-phosphate from D-glucose 6-phosphate (oxidative stage): step 2/3. Its function is as follows. Catalyzes the hydrolysis of 6-phosphogluconolactone to 6-phosphogluconate. This chain is 6-phosphogluconolactonase, found in Buchnera aphidicola subsp. Acyrthosiphon pisum (strain Tuc7).